The following is an 89-amino-acid chain: Protein S100-A8 (89 aa).

2 EF-hand domains span residues 12–47 and 46–81; these read LIDV…KFMK and MKKK…VGLE. The Zn(2+) site is built by H17 and H27. Residue D33 coordinates Ca(2+). The residue at position 42 (C42) is an S-nitrosocysteine. The Ca(2+) site is built by D59, N61, D63, and E70. Residue H83 participates in Zn(2+) binding.

This sequence belongs to the S-100 family. Homodimer. Preferentially exists as a heterodimer or heterotetramer with S100A9 known as calprotectin (S100A8/A9). S100A8 interacts with AGER, ATP2A2 and with the heterodimeric complex formed by TLR4 and LY96. Calprotectin (S100A8/9) interacts with CEACAM3 and tubulin filaments in a calcium-dependent manner. Heterotetrameric calprotectin (S100A8/A9) interacts with ANXA6 and associates with tubulin filaments in activated monocytes. S100A8 and calprotectin (S100A8/9) interact with NCF2/P67PHOX, RAC1 and RAC2. Calprotectin (S100A8/9) interacts with CYBA and CYBB. Calprotectin (S100A8/9) interacts with NOS2 to form the iNOS-S100A8/A9 transnitrosylase complex. Calprotectin (S100A8/9) interacts with CD69. As to expression, found essentially in phagocytic cells.

Its subcellular location is the secreted. It localises to the cytoplasm. It is found in the cytoskeleton. The protein resides in the cell membrane. In terms of biological role, S100A8 is a calcium- and zinc-binding protein which plays a prominent role in the regulation of inflammatory processes and immune response. It can induce neutrophil chemotaxis and adhesion. Predominantly found as calprotectin (S100A8/A9) which has a wide plethora of intra- and extracellular functions. The intracellular functions include: facilitating leukocyte arachidonic acid trafficking and metabolism, modulation of the tubulin-dependent cytoskeleton during migration of phagocytes and activation of the neutrophilic NADPH-oxidase. Also participates in regulatory T-cell differentiation together with CD69. Activates NADPH-oxidase by facilitating the enzyme complex assembly at the cell membrane, transferring arachidonic acid, an essential cofactor, to the enzyme complex and S100A8 contributes to the enzyme assembly by directly binding to NCF2/P67PHOX. The extracellular functions involve pro-inflammatory, antimicrobial, oxidant-scavenging and apoptosis-inducing activities. Its pro-inflammatory activity includes recruitment of leukocytes, promotion of cytokine and chemokine production, and regulation of leukocyte adhesion and migration. Acts as an alarmin or a danger associated molecular pattern (DAMP) molecule and stimulates innate immune cells via binding to pattern recognition receptors such as Toll-like receptor 4 (TLR4) and receptor for advanced glycation endproducts (AGER). Binding to TLR4 and AGER activates the MAP-kinase and NF-kappa-B signaling pathways resulting in the amplification of the pro-inflammatory cascade. Has antimicrobial activity towards bacteria and fungi and exerts its antimicrobial activity probably via chelation of Zn(2+) which is essential for microbial growth. Can induce cell death via autophagy and apoptosis and this occurs through the cross-talk of mitochondria and lysosomes via reactive oxygen species (ROS) and the process involves BNIP3. Can regulate neutrophil number and apoptosis by an anti-apoptotic effect; regulates cell survival via ITGAM/ITGB and TLR4 and a signaling mechanism involving MEK-ERK. Its role as an oxidant scavenger has a protective role in preventing exaggerated tissue damage by scavenging oxidants. The iNOS-S100A8/A9 transnitrosylase complex is proposed to direct selective inflammatory stimulus-dependent S-nitrosylation of multiple targets such as GAPDH, ANXA5, EZR, MSN and VIM by recognizing a [IL]-x-C-x-x-[DE] motif; S100A8 seems to contribute to S-nitrosylation site selectivity. This is Protein S100-A8 (S100A8) from Bos taurus (Bovine).